The primary structure comprises 100 residues: Small ribosomal subunit protein uS14 (100 aa).

Zn(2+) contacts are provided by Cys-63, Cys-66, Cys-79, and Cys-82.

It belongs to the universal ribosomal protein uS14 family. Part of the 30S ribosomal subunit. Contacts proteins S3 and S10. It depends on Zn(2+) as a cofactor.

Its function is as follows. Binds 16S rRNA, required for the assembly of 30S particles and may also be responsible for determining the conformation of the 16S rRNA at the A site. The sequence is that of Small ribosomal subunit protein uS14 (rpsN) from Legionella pneumophila (strain Paris).